Here is a 218-residue protein sequence, read N- to C-terminus: Histidine biosynthesis bifunctional protein HisIE (218 aa).

The interval 1–131 (MAPHQFKSKG…GDYDLPPADT (131 aa)) is phosphoribosyl-AMP cyclohydrolase. A phosphoribosyl-ATP pyrophosphohydrolase region spans residues 132 to 218 (LSQVFRVVEE…VYRALQQRRR (87 aa)).

It in the N-terminal section; belongs to the PRA-CH family. In the C-terminal section; belongs to the PRA-PH family.

It is found in the cytoplasm. It catalyses the reaction 1-(5-phospho-beta-D-ribosyl)-ATP + H2O = 1-(5-phospho-beta-D-ribosyl)-5'-AMP + diphosphate + H(+). The catalysed reaction is 1-(5-phospho-beta-D-ribosyl)-5'-AMP + H2O = 1-(5-phospho-beta-D-ribosyl)-5-[(5-phospho-beta-D-ribosylamino)methylideneamino]imidazole-4-carboxamide. It participates in amino-acid biosynthesis; L-histidine biosynthesis; L-histidine from 5-phospho-alpha-D-ribose 1-diphosphate: step 2/9. The protein operates within amino-acid biosynthesis; L-histidine biosynthesis; L-histidine from 5-phospho-alpha-D-ribose 1-diphosphate: step 3/9. This is Histidine biosynthesis bifunctional protein HisIE from Gloeobacter violaceus (strain ATCC 29082 / PCC 7421).